The chain runs to 530 residues: AA9 family lytic polysaccharide monooxygenase C (530 aa).

The first 18 residues, 1-18 (MQLKSTVHFLSLLAYTAA), serve as a signal peptide directing secretion. Positions 19 and 103 each coordinate Cu(2+). Cystine bridges form between cysteine 72-cysteine 190 and cysteine 114-cysteine 118. Residue asparagine 150 is glycosylated (N-linked (GlcNAc...) asparagine). Glutamine 185 provides a ligand contact to O2. Position 187 (tyrosine 187) interacts with Cu(2+). Residues 238 to 251 (YGSGSSSSQNSVES) show a composition bias toward low complexity. Disordered regions lie at residues 238–279 (YGSG…STSA), 297–329 (ESSS…SSSA), 348–375 (YSSA…KLSS), and 492–512 (GNGA…GTTP). A compositionally biased stretch (basic and acidic residues) spans 312 to 324 (KSVEAKETTKVEE). Over residues 348–368 (YSSASPSSSPVLSSSKPASTS) the composition is skewed to low complexity.

This sequence belongs to the polysaccharide monooxygenase AA9 family. Requires Cu(2+) as cofactor.

It is found in the secreted. The enzyme catalyses [(1-&gt;4)-beta-D-glucosyl]n+m + reduced acceptor + O2 = 4-dehydro-beta-D-glucosyl-[(1-&gt;4)-beta-D-glucosyl]n-1 + [(1-&gt;4)-beta-D-glucosyl]m + acceptor + H2O.. Its function is as follows. Lytic polysaccharide monooxygenase (LPMO) that depolymerizes polysaccharides via the oxidation of scissile alpha- or beta-(1-4)-glycosidic bonds, yielding C1 or C4 oxidation products. Catalysis by LPMOs requires the reduction of the active-site copper from Cu(II) to Cu(I) by a reducing agent and H(2)O(2) or O(2) as a cosubstrate. Amorphous cellulose is not a suitable substrate for LPMO9C, which may act at the surface of cellulose microfibrils without any release of soluble products. This Geotrichum candidum (Oospora lactis) protein is AA9 family lytic polysaccharide monooxygenase C.